Here is a 199-residue protein sequence, read N- to C-terminus: NAD(P)H dehydrogenase (quinone) (199 aa).

Residues 4-190 (ILVLYYSTYG…DGARFQGRHV (187 aa)) enclose the Flavodoxin-like domain. Residues 10–15 (STYGHI) and 78–80 (TRF) each bind FMN. Position 12 (tyrosine 12) interacts with NAD(+). Tryptophan 98 is a substrate binding site. FMN-binding positions include 113–119 (STATQHG) and histidine 134.

The protein belongs to the WrbA family. FMN is required as a cofactor.

The catalysed reaction is a quinone + NADH + H(+) = a quinol + NAD(+). It catalyses the reaction a quinone + NADPH + H(+) = a quinol + NADP(+). The chain is NAD(P)H dehydrogenase (quinone) from Rhizorhabdus wittichii (strain DSM 6014 / CCUG 31198 / JCM 15750 / NBRC 105917 / EY 4224 / RW1) (Sphingomonas wittichii).